The following is a 257-amino-acid chain: Small ribosomal subunit protein uS2 (257 aa).

The disordered stretch occupies residues 229-257 (QFTPATTSSQEVDKASEQVEIAADDIDEE).

Belongs to the universal ribosomal protein uS2 family.

In Caldicellulosiruptor bescii (strain ATCC BAA-1888 / DSM 6725 / KCTC 15123 / Z-1320) (Anaerocellum thermophilum), this protein is Small ribosomal subunit protein uS2.